The chain runs to 388 residues: Succinate--CoA ligase [ADP-forming] subunit beta (388 aa).

The 236-residue stretch at lysine 9 to glutamate 244 folds into the ATP-grasp domain. ATP contacts are provided by residues lysine 46, glycine 53 to glycine 55, glutamate 99, alanine 102, and glutamate 107. 2 residues coordinate Mg(2+): asparagine 199 and aspartate 213. Substrate contacts are provided by residues asparagine 264 and glycine 321–methionine 323.

It belongs to the succinate/malate CoA ligase beta subunit family. Heterotetramer of two alpha and two beta subunits. It depends on Mg(2+) as a cofactor.

It carries out the reaction succinate + ATP + CoA = succinyl-CoA + ADP + phosphate. The enzyme catalyses GTP + succinate + CoA = succinyl-CoA + GDP + phosphate. It participates in carbohydrate metabolism; tricarboxylic acid cycle; succinate from succinyl-CoA (ligase route): step 1/1. Functionally, succinyl-CoA synthetase functions in the citric acid cycle (TCA), coupling the hydrolysis of succinyl-CoA to the synthesis of either ATP or GTP and thus represents the only step of substrate-level phosphorylation in the TCA. The beta subunit provides nucleotide specificity of the enzyme and binds the substrate succinate, while the binding sites for coenzyme A and phosphate are found in the alpha subunit. This is Succinate--CoA ligase [ADP-forming] subunit beta from Albidiferax ferrireducens (strain ATCC BAA-621 / DSM 15236 / T118) (Rhodoferax ferrireducens).